The following is a 173-amino-acid chain: CASP-like protein 3A1 (173 aa).

Residue Met1 is a topological domain, cytoplasmic. Residues 2-22 (VDIALRSAVVAFMVVSLSAMF) traverse the membrane as a helical segment. Over 23–48 (TSTQHSEVHIIGFSIPVSLRWNRSQP) the chain is Extracellular. N-linked (GlcNAc...) asparagine glycosylation occurs at Asn44. The chain crosses the membrane as a helical span at residues 49-69 (FEFLVVVELLICAYAFVQFVY). At 70–84 (QSVVLAKNAVPTRRC) the chain is on the cytoplasmic side. Residues 85-105 (IWVQLAADQVCAYLVLAAAAA) form a helical membrane-spanning segment. At 106–140 (AAGASRTNKSGFQSLGMQNIKVPGVCIVLDKFCNR) the chain is on the extracellular side. Asn113 carries an N-linked (GlcNAc...) asparagine glycan. Residues 141-161 (ATIAIIFTLLAAGASGISVTL) form a helical membrane-spanning segment. The Cytoplasmic portion of the chain corresponds to 162 to 173 (DVYMLTLTYYMG).

Belongs to the Casparian strip membrane proteins (CASP) family. In terms of assembly, homodimer and heterodimers.

It localises to the cell membrane. The polypeptide is CASP-like protein 3A1 (Pteridium aquilinum subsp. aquilinum (Bracken fern)).